A 576-amino-acid chain; its full sequence is Low-affinity glucose transporter HXT4 (576 aa).

The tract at residues 1-56 (MSEEAAYQEDTAVQNTPADALSPVESDSNSALSTPSNKAERDDMKDFDENHEESNN) is disordered. Over 1–66 (MSEEAAYQED…YVEIPKKPAS (66 aa)) the chain is Cytoplasmic. A compositionally biased stretch (polar residues) spans 25-37 (ESDSNSALSTPSN). The span at 38–54 (KAERDDMKDFDENHEES) shows a compositional bias: basic and acidic residues. A Glycyl lysine isopeptide (Lys-Gly) (interchain with G-Cter in ubiquitin) cross-link involves residue Lys-45. The helical transmembrane segment at 67-87 (AYVTVSICCLMVAFGGFVFGW) threads the bilayer. Over 88–122 (DTGTISGFVAQTDFIRRFGMKHHDGTYYLSKVRTG) the chain is Extracellular. The chain crosses the membrane as a helical span at residues 123-143 (LIVSIFNIGCAIGGIILAKLG). At 144–149 (DMYGRK) the chain is on the cytoplasmic side. The helical transmembrane segment at 150–170 (MGLIVVVVIYIIGIIIQIASI) threads the bilayer. Topologically, residues 171-180 (NKWYQYFIGR) are extracellular. Residues 181-201 (IISGLGVGGIAVLSPMLISEV) traverse the membrane as a helical segment. Residues 202–207 (SPKHIR) lie on the Cytoplasmic side of the membrane. Residues 208–228 (GTLVSCYQLMITLGIFLGYCT) form a helical membrane-spanning segment. Topologically, residues 229–242 (NYGTKTYTNSVQWR) are extracellular. A helical membrane pass occupies residues 243-263 (VPLGLGFAWALFMIGGMTFVP). Topologically, residues 264–346 (ESPRYLVEVG…IQSLQQLTGD (83 aa)) are cytoplasmic. The helical transmembrane segment at 347 to 363 (NYFFYYGTTVFTAVGLE) threads the bilayer. Residues 364–369 (DSFETS) are Extracellular-facing. Residues 370–387 (IVLGIVNFASTFVGIFLV) form a helical membrane-spanning segment. Over 388–394 (ERYGRRR) the chain is Cytoplasmic. Residues 395–415 (CLLWGAASMTACMVVFASVGV) traverse the membrane as a helical segment. Over 416–437 (TRLWPNGKKNGSSKGAGNCMIV) the chain is Extracellular. Asn-425 carries N-linked (GlcNAc...) asparagine glycosylation. Residues 438–458 (FTCFYLFCFATTWAPIPFVVN) form a helical membrane-spanning segment. Residues 459–475 (SETFPLRVKSKCMAIAQ) are Cytoplasmic-facing. A helical membrane pass occupies residues 476 to 496 (ACNWIWGFLIGFFTPFISGAI). Asp-497 is a topological domain (extracellular). The helical transmembrane segment at 498-518 (FYYGYVFMGCLVFSYFYVFFF) threads the bilayer. Residues 519 to 576 (VPETKGLTLEEVNTLWEEGVLPWKSPSWVPPNKRGTDYNADDLMHDDQPFYKKMFGKK) are Cytoplasmic-facing.

Belongs to the major facilitator superfamily. Sugar transporter (TC 2.A.1.1) family.

The protein localises to the cell membrane. Its activity is regulated as follows. Xylose uptake is strongly inhibited by glucose. Functionally, low-affinity glucose transporter. Can also transport xylose. This Saccharomyces cerevisiae (strain ATCC 204508 / S288c) (Baker's yeast) protein is Low-affinity glucose transporter HXT4 (HXT4).